Consider the following 708-residue polypeptide: Radial spoke head protein 6 homolog A (708 aa).

4 disordered regions span residues 1 to 94, 376 to 407, 495 to 514, and 663 to 708; these read MGEP…GYTP, ETHGEEEGEEDEEKVVDSVPKPQWKPPPIIPK, EEEGDEEEEGGAGRDSFEEN, and GPEI…DLED. The segment covering 10–32 has biased composition (polar residues); it reads PSQTRRASQGSERARSQEYSQPL. Low complexity predominate over residues 47–56; the sequence is RGSRSSQGSQ. The span at 495–504 shows a compositional bias: acidic residues; it reads EEEGDEEEEG. Over residues 680-690 the composition is skewed to low complexity; that stretch reads LKAAQEQALAA. Acidic residues predominate over residues 691–708; it reads AEEEEEDEEEEEDEDLED.

The protein belongs to the flagellar radial spoke RSP4/6 family. Component of the axonemal radial spoke 1 (RS1) and 2 (RS2) complexes, at least composed of spoke head proteins RSPH1, RSPH3, RSPH9 and the cilia-specific component RSPH4A or sperm-specific component RSPH6A, spoke stalk proteins RSPH14, DNAJB13, DYDC1, ROPN1L and NME5, and the RS1 complex-specific anchor protein IQUB. Interacts with RSPH1. Interacts with RSPH3B. Interacts with RSPH4A. Interacts with RSPH9. Interacts with RSPH10B. Post-translationally, phosphorylated by PKA. Phosphorylation increases in capacitated sperm. Expressed in sperm and testis (at protein level).

It localises to the cytoplasm. It is found in the cytoskeleton. The protein localises to the flagellum axoneme. In terms of biological role, functions as part of radial spoke complexes in the axoneme of sperm flagella that play an important part in motility. The triple radial spokes (RS1, RS2 and RS3) are required to modulate beating of the sperm flagellum. This is Radial spoke head protein 6 homolog A from Mus musculus (Mouse).